Reading from the N-terminus, the 141-residue chain is Superoxide dismutase [Cu-Zn], chloroplastic (141 aa).

Cu cation-binding residues include H33, H35, and H50. C44 and C133 form a disulfide bridge. Residues H50, H58, H67, and D70 each contribute to the Zn(2+) site. Position 107 (H107) interacts with Cu cation.

This sequence belongs to the Cu-Zn superoxide dismutase family. As to quaternary structure, homotetramer. Requires Cu cation as cofactor. Zn(2+) serves as cofactor.

It is found in the plastid. Its subcellular location is the chloroplast. The catalysed reaction is 2 superoxide + 2 H(+) = H2O2 + O2. Functionally, destroys radicals which are normally produced within the cells and which are toxic to biological systems. The chain is Superoxide dismutase [Cu-Zn], chloroplastic (SODCP) from Pinus sylvestris (Scotch pine).